We begin with the raw amino-acid sequence, 306 residues long: tRNA dimethylallyltransferase (306 aa).

9 to 16 provides a ligand contact to ATP; the sequence is GPTAIGKT. 11–16 contributes to the substrate binding site; sequence TAIGKT. The tract at residues 34-37 is interaction with substrate tRNA; the sequence is DSMQ.

It belongs to the IPP transferase family. Monomer. Mg(2+) is required as a cofactor.

It catalyses the reaction adenosine(37) in tRNA + dimethylallyl diphosphate = N(6)-dimethylallyladenosine(37) in tRNA + diphosphate. Catalyzes the transfer of a dimethylallyl group onto the adenine at position 37 in tRNAs that read codons beginning with uridine, leading to the formation of N6-(dimethylallyl)adenosine (i(6)A). The protein is tRNA dimethylallyltransferase of Lactobacillus helveticus (strain DPC 4571).